We begin with the raw amino-acid sequence, 254 residues long: Phosphoribosylaminoimidazole-succinocarboxamide synthase 1 (254 aa).

It belongs to the SAICAR synthetase family.

It carries out the reaction 5-amino-1-(5-phospho-D-ribosyl)imidazole-4-carboxylate + L-aspartate + ATP = (2S)-2-[5-amino-1-(5-phospho-beta-D-ribosyl)imidazole-4-carboxamido]succinate + ADP + phosphate + 2 H(+). It participates in purine metabolism; IMP biosynthesis via de novo pathway; 5-amino-1-(5-phospho-D-ribosyl)imidazole-4-carboxamide from 5-amino-1-(5-phospho-D-ribosyl)imidazole-4-carboxylate: step 1/2. This Agrobacterium fabrum (strain C58 / ATCC 33970) (Agrobacterium tumefaciens (strain C58)) protein is Phosphoribosylaminoimidazole-succinocarboxamide synthase 1 (purC1).